We begin with the raw amino-acid sequence, 232 residues long: MPNGKPDPASLSDRQRRILEVIRDAVVLRGYPPSIREIGDAAGLQSTSSVAYQLKELEKKGFLRRDPNKPRAVDVRHLPETESRSSKAATQAKSKAPQAGVHDPELAGQTSFVPVVGKIAAGSPITAEQNIEEYYPLPAEIVGDGDLFMLQVVGESMRDAGILTGDWVVVRSQPVAEQGEFVAAMIDGEATVKEFHKDSSGIWLLPHNDTFAPIPAENAEIMGKVVSVMRKL.

A DNA-binding region (H-T-H motif) is located at residues 35-55 (IREIGDAAGLQSTSSVAYQLK). Residues 61–85 (GFLRRDPNKPRAVDVRHLPETESRS) show a composition bias toward basic and acidic residues. Positions 61–104 (GFLRRDPNKPRAVDVRHLPETESRSSKAATQAKSKAPQAGVHDP) are disordered. A compositionally biased stretch (low complexity) spans 86–99 (SKAATQAKSKAPQA). Active-site for autocatalytic cleavage activity residues include Ser156 and Lys193.

Belongs to the peptidase S24 family. Homodimer.

It carries out the reaction Hydrolysis of Ala-|-Gly bond in repressor LexA.. Its function is as follows. Represses a number of genes involved in the response to DNA damage (SOS response), including recA and lexA. In the presence of single-stranded DNA, RecA interacts with LexA causing an autocatalytic cleavage which disrupts the DNA-binding part of LexA, leading to derepression of the SOS regulon and eventually DNA repair. In Corynebacterium glutamicum (strain ATCC 13032 / DSM 20300 / JCM 1318 / BCRC 11384 / CCUG 27702 / LMG 3730 / NBRC 12168 / NCIMB 10025 / NRRL B-2784 / 534), this protein is LexA repressor.